The primary structure comprises 1413 residues: DNA-directed RNA polymerase subunit beta' (1413 aa).

The Zn(2+) site is built by Cys-70, Cys-72, Cys-85, and Cys-88. Mg(2+)-binding residues include Asp-460, Asp-462, and Asp-464. Zn(2+) contacts are provided by Cys-819, Cys-893, Cys-900, and Cys-903. The disordered stretch occupies residues 1392–1413 (EEAFDFGTPSAPAEEPQHPAAE).

It belongs to the RNA polymerase beta' chain family. The RNAP catalytic core consists of 2 alpha, 1 beta, 1 beta' and 1 omega subunit. When a sigma factor is associated with the core the holoenzyme is formed, which can initiate transcription. Requires Mg(2+) as cofactor. Zn(2+) serves as cofactor.

It carries out the reaction RNA(n) + a ribonucleoside 5'-triphosphate = RNA(n+1) + diphosphate. DNA-dependent RNA polymerase catalyzes the transcription of DNA into RNA using the four ribonucleoside triphosphates as substrates. This is DNA-directed RNA polymerase subunit beta' from Burkholderia orbicola (strain MC0-3).